The chain runs to 408 residues: DNA-directed RNA polymerase subunit Rpo1C (408 aa).

This sequence belongs to the RNA polymerase beta' chain family. Part of the RNA polymerase complex.

The protein localises to the cytoplasm. It catalyses the reaction RNA(n) + a ribonucleoside 5'-triphosphate = RNA(n+1) + diphosphate. In terms of biological role, DNA-dependent RNA polymerase (RNAP) catalyzes the transcription of DNA into RNA using the four ribonucleoside triphosphates as substrates. Forms part of the jaw domain. The sequence is that of DNA-directed RNA polymerase subunit Rpo1C from Methanosarcina mazei (strain ATCC BAA-159 / DSM 3647 / Goe1 / Go1 / JCM 11833 / OCM 88) (Methanosarcina frisia).